We begin with the raw amino-acid sequence, 385 residues long: WD repeat-containing protein RUP1 (385 aa).

7 WD repeats span residues 69–108, 119–160, 163–205, 210–250, 254–292, 298–337, and 348–385; these read TGSD…ESRD, CTPA…PVSE, EHGG…TLEE, GGGA…DPLI, GHTK…RVVR, VNSR…PVWV, and SDRR…GKQS.

Interacts with UVR8. Interacts directly with DHU1.

The protein resides in the nucleus. It is found in the cytoplasm. It localises to the cytosol. Functionally, functions in association with RUP2 as repressor of UV-B-induced photomorphogenesis mediated by UVR8 and HY5, likely in coordination with DHU1. Plays a crucial negative feedback regulatory role downstream of UVR8-COP1 to inhibit UVR8 function, balance UV-B-specific responses and ensure normal plant growth. Is involved in the regulation of photoperiodic flowering and vegetative development. In Arabidopsis thaliana (Mouse-ear cress), this protein is WD repeat-containing protein RUP1.